We begin with the raw amino-acid sequence, 943 residues long: UvrABC system protein A (943 aa).

31–38 (GLSGSGKS) is an ATP binding site. Residues 253-280 (CPHCGYSVPELEPRLFSFNNPAGACPTC) form a C4-type zinc finger. ABC transporter domains are found at residues 310 to 587 (WDRR…PNSI) and 607 to 937 (LDKK…RFLK). ATP is bound at residue 640-647 (GVSGSGKS). The segment at 740 to 766 (CEACQGDGVLKVEMHFLPDVYVPCDQC) adopts a C4-type zinc-finger fold.

The protein belongs to the ABC transporter superfamily. UvrA family. In terms of assembly, forms a heterotetramer with UvrB during the search for lesions.

The protein resides in the cytoplasm. Functionally, the UvrABC repair system catalyzes the recognition and processing of DNA lesions. UvrA is an ATPase and a DNA-binding protein. A damage recognition complex composed of 2 UvrA and 2 UvrB subunits scans DNA for abnormalities. When the presence of a lesion has been verified by UvrB, the UvrA molecules dissociate. The protein is UvrABC system protein A of Haemophilus influenzae (strain ATCC 51907 / DSM 11121 / KW20 / Rd).